A 476-amino-acid chain; its full sequence is Lactate utilization protein B (476 aa).

4Fe-4S ferredoxin-type domains are found at residues 304–334 (GTEF…GHSY) and 353–382 (YDDY…LHEL). Cys-313, Cys-316, Cys-319, Cys-323, Cys-366, Cys-369, and Cys-373 together coordinate [4Fe-4S] cluster. A disordered region spans residues 440-476 (KGPGPLKAWTESREFPAPSKERFRDWFQTRQKGGNPS). Positions 449–466 (TESREFPAPSKERFRDWF) are enriched in basic and acidic residues. Positions 467-476 (QTRQKGGNPS) are enriched in polar residues.

The protein belongs to the LutB/YkgF family.

Is involved in L-lactate degradation and allows cells to grow with lactate as the sole carbon source. Has probably a role as an electron transporter during oxidation of L-lactate. This chain is Lactate utilization protein B, found in Geobacillus kaustophilus (strain HTA426).